A 382-amino-acid chain; its full sequence is Intermediate transcription factor 3 large subunit (382 aa).

This sequence belongs to the poxviruses A23 family. As to quaternary structure, heterodimer of a 45 kDa and a 32 kDa subunit.

Functionally, acts with RNA polymerase to initiate transcription from intermediate gene promoters. This chain is Intermediate transcription factor 3 large subunit (VITF3L), found in Ectromelia virus (strain Moscow) (ECTV).